Consider the following 193-residue polypeptide: Xanthine phosphoribosyltransferase (193 aa).

Xanthine is bound by residues leucine 20 and threonine 27. 128–132 contacts 5-phospho-alpha-D-ribose 1-diphosphate; sequence ANGQA. Residue lysine 156 participates in xanthine binding.

The protein belongs to the purine/pyrimidine phosphoribosyltransferase family. Xpt subfamily. Homodimer.

The protein resides in the cytoplasm. It carries out the reaction XMP + diphosphate = xanthine + 5-phospho-alpha-D-ribose 1-diphosphate. Its pathway is purine metabolism; XMP biosynthesis via salvage pathway; XMP from xanthine: step 1/1. Functionally, converts the preformed base xanthine, a product of nucleic acid breakdown, to xanthosine 5'-monophosphate (XMP), so it can be reused for RNA or DNA synthesis. This is Xanthine phosphoribosyltransferase from Streptococcus pneumoniae (strain CGSP14).